Here is a 309-residue protein sequence, read N- to C-terminus: Aspartate carbamoyltransferase catalytic subunit (309 aa).

Positions 59 and 60 each coordinate carbamoyl phosphate. Lys87 lines the L-aspartate pocket. Residues Arg109, His139, and Gln142 each contribute to the carbamoyl phosphate site. L-aspartate is bound by residues Arg172 and Arg224. Carbamoyl phosphate-binding residues include Ala265 and Pro266.

This sequence belongs to the aspartate/ornithine carbamoyltransferase superfamily. ATCase family. Heterododecamer (2C3:3R2) of six catalytic PyrB chains organized as two trimers (C3), and six regulatory PyrI chains organized as three dimers (R2).

It carries out the reaction carbamoyl phosphate + L-aspartate = N-carbamoyl-L-aspartate + phosphate + H(+). It participates in pyrimidine metabolism; UMP biosynthesis via de novo pathway; (S)-dihydroorotate from bicarbonate: step 2/3. In terms of biological role, catalyzes the condensation of carbamoyl phosphate and aspartate to form carbamoyl aspartate and inorganic phosphate, the committed step in the de novo pyrimidine nucleotide biosynthesis pathway. This is Aspartate carbamoyltransferase catalytic subunit from Streptococcus uberis (strain ATCC BAA-854 / 0140J).